The chain runs to 122 residues: Large ribosomal subunit protein uL14c (122 aa).

This sequence belongs to the universal ribosomal protein uL14 family. As to quaternary structure, part of the 50S ribosomal subunit.

It localises to the plastid. It is found in the chloroplast. Its function is as follows. Binds to 23S rRNA. This Phalaenopsis aphrodite subsp. formosana (Moth orchid) protein is Large ribosomal subunit protein uL14c.